The sequence spans 804 residues: Leucine--tRNA ligase (804 aa).

The short motif at 39–50 (PFPSGKGLHVGH) is the 'HIGH' region element. The short motif at 573–577 (KMSKS) is the 'KMSKS' region element. Lysine 576 serves as a coordination point for ATP.

The protein belongs to the class-I aminoacyl-tRNA synthetase family.

The protein resides in the cytoplasm. It catalyses the reaction tRNA(Leu) + L-leucine + ATP = L-leucyl-tRNA(Leu) + AMP + diphosphate. In Lactobacillus johnsonii (strain CNCM I-12250 / La1 / NCC 533), this protein is Leucine--tRNA ligase.